The chain runs to 444 residues: MILDTVDEKKKGVHTRYLILLIIFIVTAVNYADRATLSIAGTEVAKELQLSAVSMGYIFSAFGWAYLLMQIPGGWLLDKFGSKKVYTYSLFFWSLFTFLQGFVDMFPLAWAGISMFFMRFMLGFSEAPSFPANARIVAAWFPTKERGTASAIFNSAQYFSLALFSPLLGWLTFAWGWEHVFTVMGVIGFVLTALWIKLIHNPTDHPRMSAEELKFISENGAVVDMDHKKPGSAAASGPKLHYIKQLLSNRMMLGVFFGQYFINTITWFFLTWFPIYLVQEKGMSILKVGLVASIPALCGFAGGVLGGVFSDYLIKRGLSLTLARKLPIVLGMLLASTIILCNYTNNTTLVVMLMALAFFGKGFGALGWPVISDTAPKEIVGLCGGVFNVFGNVASIVTPLVIGYLVSELHSFNAALVFVGCSALMAMVCYLFVVGDIKRMELQK.

Topologically, residues methionine 1 to lysine 11 are cytoplasmic. A helical membrane pass occupies residues glycine 12–alanine 32. At aspartate 33 to glycine 56 the chain is on the periplasmic side. The helical transmembrane segment at tyrosine 57–leucine 77 threads the bilayer. Residues aspartate 78 to serine 89 lie on the Cytoplasmic side of the membrane. Helical transmembrane passes span leucine 90–tryptophan 110 and alanine 111–proline 131. Residues alanine 132–glutamine 157 lie on the Cytoplasmic side of the membrane. Helical transmembrane passes span tyrosine 158–glutamate 178 and histidine 179–isoleucine 199. At histidine 200–methionine 252 the chain is on the cytoplasmic side. Residues leucine 253–phenylalanine 273 traverse the membrane as a helical segment. Residues proline 274 to valine 288 lie on the Periplasmic side of the membrane. Residues glycine 289–phenylalanine 309 traverse the membrane as a helical segment. The Cytoplasmic segment spans residues serine 310–serine 319. The chain crosses the membrane as a helical span at residues leucine 320 to leucine 340. The Periplasmic segment spans residues cysteine 341–valine 350. A helical membrane pass occupies residues valine 351–isoleucine 371. The Cytoplasmic segment spans residues serine 372–glycine 385. Residues valine 386 to valine 406 traverse the membrane as a helical segment. Residues serine 407–asparagine 413 are Periplasmic-facing. Residues alanine 414–valine 434 form a helical membrane-spanning segment. Topologically, residues glycine 435–lysine 444 are cytoplasmic.

Belongs to the major facilitator superfamily. Phthalate permease family.

The protein localises to the cell inner membrane. It carries out the reaction galactarate(in) + H(+)(in) = galactarate(out) + H(+)(out). It catalyses the reaction D-glucarate(in) + H(+)(in) = D-glucarate(out) + H(+)(out). The enzyme catalyses (R)-glycerate(in) + H(+)(in) = (R)-glycerate(out) + H(+)(out). Functionally, probably involved in the uptake of galactarate and/or D-glucarate. May also transport D-glycerate. The sequence is that of Probable galactarate/D-glucarate transporter GarP from Escherichia coli (strain K12).